Reading from the N-terminus, the 143-residue chain is Putative 2'-deoxynucleoside 5'-phosphate N-hydrolase 1 (143 aa).

Residues His37, Glu82, and 106–108 (SAM) each bind substrate.

This sequence belongs to the 2'-deoxynucleoside 5'-phosphate N-hydrolase 1 family. In terms of assembly, monomer and homodimer.

It catalyses the reaction a pyrimidine 2'-deoxyribonucleoside 5'-phosphate + H2O = a pyrimidine nucleobase + 2-deoxy-D-ribose 5-phosphate. The enzyme catalyses a purine 2'-deoxyribonucleoside 5'-phosphate + H2O = a purine nucleobase + 2-deoxy-D-ribose 5-phosphate. Catalyzes the cleavage of the N-glycosidic bond of deoxyribonucleoside 5'-monophosphates to yield deoxyribose 5-phosphate and a purine or pyrimidine base. In Thermofilum pendens (strain DSM 2475 / Hrk 5), this protein is Putative 2'-deoxynucleoside 5'-phosphate N-hydrolase 1.